Consider the following 290-residue polypeptide: Nucleoid occlusion protein (290 aa).

The H-T-H motif DNA-binding region spans 153–172; it reads EALAQRLGKGQSTIANKLRL.

The protein belongs to the ParB family.

The protein localises to the cytoplasm. It is found in the nucleoid. In terms of biological role, effects nucleoid occlusion by binding relatively nonspecifically to DNA and preventing the assembly of the division machinery in the vicinity of the nucleoid, especially under conditions that disturb the cell cycle. It helps to coordinate cell division and chromosome segregation by preventing the formation of the Z ring through the nucleoid, which would cause chromosome breakage. The polypeptide is Nucleoid occlusion protein (Bacillus cereus (strain ATCC 10987 / NRS 248)).